Here is a 382-residue protein sequence, read N- to C-terminus: Mannitol-1-phosphate 5-dehydrogenase (382 aa).

An NAD(+)-binding site is contributed by 3–14; it reads AVHFGAGNIGRG.

The protein belongs to the mannitol dehydrogenase family.

The catalysed reaction is D-mannitol 1-phosphate + NAD(+) = beta-D-fructose 6-phosphate + NADH + H(+). In Exiguobacterium sp. (strain ATCC BAA-1283 / AT1b), this protein is Mannitol-1-phosphate 5-dehydrogenase.